The primary structure comprises 686 residues: Chondroitin synthase (686 aa).

The segment at 130–417 is galactosaminyltransferase; A1 domain; sequence YVWAGKRKEL…LLQQKVPYFY (288 aa). Residues Pro157, Arg161, Asp188, Tyr217, Arg223, and 239–240 each bind UDP-N-acetyl-alpha-D-galactosamine; that span reads DC. Asp241 contributes to the Mn(2+) binding site. UDP-N-acetyl-alpha-D-galactosamine is bound at residue 361 to 362; sequence ED. His386 contributes to the Mn(2+) binding site. A glucuronosyltransferase; A2 domain region spans residues 418 to 682; the sequence is RKKEKIESAT…ECRKYTWEKI (265 aa). UDP-alpha-D-glucuronate-binding positions include Tyr441, Asp469, and 517 to 520; that span reads QLDS. Mn(2+) is bound at residue Asp521. UDP-alpha-D-glucuronate is bound by residues His581 and 603–604; that span reads AV. His631 contributes to the Mn(2+) binding site.

Belongs to the glycosyltransferase 2 family. CS/HAS subfamily. The cofactor is Mn(2+).

It carries out the reaction 3-O-(beta-D-GlcA-(1-&gt;3)-beta-D-GalNAc-(1-&gt;4)-beta-D-GlcA-(1-&gt;3)-beta-D-Gal-(1-&gt;3)-beta-D-Gal-(1-&gt;4)-beta-D-Xyl)-L-seryl-[protein] + UDP-N-acetyl-alpha-D-galactosamine = 3-O-(beta-D-GalNAc-(1-&gt;4)-beta-D-GlcA-(1-&gt;3)-beta-D-GalNAc-(1-&gt;4)-beta-D-GlcA-(1-&gt;3)-beta-D-Gal-(1-&gt;3)-beta-D-Gal-(1-&gt;4)-beta-D-Xyl)-L-seryl-[protein] + UDP + H(+). The catalysed reaction is 3-O-{beta-D-GlcA-(1-&gt;3)-[beta-D-GalNAc-(1-&gt;4)-beta-D-GlcA-(1-&gt;3)](n)-beta-D-GalNAc-(1-&gt;4)-beta-D-GlcA-(1-&gt;3)-beta-D-Gal-(1-&gt;3)-beta-D-Gal-(1-&gt;4)-beta-D-Xyl}-L-seryl-[protein] + UDP-N-acetyl-alpha-D-galactosamine = 3-O-{[beta-D-GalNAc-(1-&gt;4)-beta-D-GlcA-(1-&gt;3)](n+1)-beta-D-GalNAc-(1-&gt;4)-beta-D-GlcA-(1-&gt;3)-beta-D-Gal-(1-&gt;3)-beta-D-Gal-(1-&gt;4)-beta-D-Xyl}-L-seryl-[protein] + UDP + H(+). The enzyme catalyses 3-O-(beta-D-GalNAc-(1-&gt;4)-beta-D-GlcA-(1-&gt;3)-beta-D-Gal-(1-&gt;3)-beta-D-Gal-(1-&gt;4)-beta-D-Xyl)-L-seryl-[protein] + UDP-alpha-D-glucuronate = 3-O-(beta-D-GlcA-(1-&gt;3)-beta-D-GalNAc-(1-&gt;4)-beta-D-GlcA-(1-&gt;3)-beta-D-Gal-(1-&gt;3)-beta-D-Gal-(1-&gt;4)-beta-D-Xyl)-L-seryl-[protein] + UDP + H(+). It catalyses the reaction 3-O-{[beta-D-GalNAc-(1-&gt;4)-beta-D-GlcA-(1-&gt;3)](n)-beta-D-GalNAc-(1-&gt;4)-beta-D-GlcA-(1-&gt;3)-beta-D-Gal-(1-&gt;3)-beta-D-Gal-(1-&gt;4)-beta-D-Xyl}-L-seryl-[protein] + UDP-alpha-D-glucuronate = 3-O-{beta-D-GlcA-(1-&gt;3)-[beta-D-GalNAc-(1-&gt;4)-beta-D-GlcA-(1-&gt;3)](n)-beta-D-GalNAc-(1-&gt;4)-beta-D-GlcA-(1-&gt;3)-beta-D-Gal-(1-&gt;3)-beta-D-Gal-(1-&gt;4)-beta-D-Xyl}-L-seryl-[protein] + UDP + H(+). In terms of biological role, glycosyltransferase that catalyzes elongation of chondroitin, a polysaccharide composed of a repeating disaccharide of N-acetylgalactosamine (GalNAc) and glucuronic acid (GlcUA) units, by alternatively transferring the GlcUA and GalNAc moiety from UDP-GlcUA and UDP-GalNAc to the non-reducing ends of the chondroitin chain. Each chondroitin unit has the composition beta-(1-&gt;4)-GlcUA-beta-(1-&gt;3)-GalNAc. This Escherichia coli protein is Chondroitin synthase (kfoC).